The primary structure comprises 236 residues: N-acetyl-alpha-D-glucosaminyl L-malate deacetylase 1 (236 aa).

Zn(2+) contacts are provided by His-12, Asp-15, and His-113.

Belongs to the PIGL family. It depends on Zn(2+) as a cofactor.

It carries out the reaction (S)-malyl N-acetyl-alpha-D-glucosaminide + H2O = (S)-malyl alpha-D-glucosaminide + acetate. Involved in bacillithiol (BSH) biosynthesis. Catalyzes the second step of the pathway, the deacetylation of N-acetylglucosaminylmalate (GlcNAc-Mal) to glucosamine malate (GlcN-Mal). The chain is N-acetyl-alpha-D-glucosaminyl L-malate deacetylase 1 from Bacillus subtilis (strain 168).